The sequence spans 507 residues: Phosphoprotein (507 aa).

Residues 1 to 48 (MAEEQARHVKNGLECIRALKAEPIGSLAIEEAMAAWSEISDNPGQERA) form an interaction with N0 region. 4 disordered regions span residues 41 to 99 (DNPG…PPRN), 134 to 163 (GLDGDSTLSGGDNESENSDVDIGEPDTEGY), 201 to 231 (NNFPKLGKTLNVPPPPDPGRASTSGTPIKKG), and 250 to 273 (GATQCARKSPSEPSGPGAPAGNVP). The residue at position 86 (serine 86) is a Phosphoserine. Low complexity predominate over residues 134–145 (GLDGDSTLSGGD). The segment covering 146-160 (NESENSDVDIGEPDT) has biased composition (acidic residues). Serine 151 carries the phosphoserine modification. Low complexity predominate over residues 260–270 (SEPSGPGAPAG). The interval 304–376 (GDYYDDELFS…LSSIMIAIPG (73 aa)) is multimerization. 2 interaction with the L polymerase regions span residues 361–377 (STLEGHLSSIMIAIPGL) and 396–410 (PIIGRDSGRALAEVL). A x domain (XD) region spans residues 457 to 507 (GPASRSVIRSIIKSSRLEEDRKRYLMTLLDDIKGANDLAKFHQMLMKIIMK). The segment at 459 to 507 (ASRSVIRSIIKSSRLEEDRKRYLMTLLDDIKGANDLAKFHQMLMKIIMK) is interaction with the nucleocapsid (N-RNA).

Belongs to the morbillivirus P protein family. In terms of assembly, homotetramer. Interacts (via multimerization domain and XD domain) with polymerase L; this interaction forms the polymerase L-P complex. Interacts (via N-terminus) with N0 (via Ncore); this interaction allows P to chaperon N0 to avoid N polymerization and non-specific RNA binding before encapsidation. Interacts (via C-terminus) with N-RNA template (via Ntail); this interaction maintains the P/L complex anchored to the nucleocapsid template during the sequential transcription. Interacts (via C-terminus) with protein C this interaction allows C to associate with the ribonucleocapsid. Phosphorylation on serines by host CK2 is necessary for the formation of viral factories.

Essential cofactor of the RNA polymerase L that plays a central role in the transcription and replication by forming the polymerase complex with RNA polymerase L and recruiting L to the genomic N-RNA template for RNA synthesis. Also plays a central role in the encapsidation of nascent RNA chains by forming the encapsidation complex with the nucleocapsid protein N (N-P complex). Acts as a chaperone for newly synthesized free N protein, so-called N0, allowing encapsidation of nascent RNA chains during replication. The nucleoprotein protein N prevents excessive phosphorylation of P, which leads to down-regulation of viral transcription/ replication. Participates, together with N, in the formation of viral factories (viroplasms), which are large inclusions in the host cytoplasm where replication takes place. The protein is Phosphoprotein (P/V) of Measles virus (strain Edmonston-AIK-C vaccine) (MeV).